A 459-amino-acid chain; its full sequence is MALTVFNTLTRKKQLFEPIQPGHVGIYVCGVTTYDYCHIGHARTYVAFDIVVRYLRKLGYSVKYVRNITDLDDKIIKRAAENGEDFHQVTERFIREMHKDFDALNLVRPDIEPRVTSHMDEIILMIERLIENGNAYEAGNGDVLFDVSTFNDYGKLSRQDLEQLQAGSRVDVDAAKQDPLDFVLWKSAKPGEPSWSSPWGEGRPGWHIECSAMNKKHLGSTFDIHGGGSDLSFPHHENEIAQSCCANQSEYVKYWMHSGMVQVDNEKMSKSLGNFFTIRSVLEQYDAETVRYFLLSSHYRSQLNYTQENLDQAHSALERLYTALRDITPQTASEELRSKYWQSFQQAMDDDLNAPEAMSVLFEIAREINRNRESAPDTAAQLAHVLLELAEVMGLLQQSPEEFLQGDDDDVAKIEALIAKRNQAREDKDWAAADEARDELTNMGIVLEDGAEGTRWRRA.

Cys-29 is a binding site for Zn(2+). The 'HIGH' region motif lies at 31 to 41 (VTTYDYCHIGH). The Zn(2+) site is built by Cys-210, His-235, and Glu-239. Residues 267 to 271 (KMSKS) carry the 'KMSKS' region motif. Lys-270 is an ATP binding site.

This sequence belongs to the class-I aminoacyl-tRNA synthetase family. As to quaternary structure, monomer. It depends on Zn(2+) as a cofactor.

The protein resides in the cytoplasm. It catalyses the reaction tRNA(Cys) + L-cysteine + ATP = L-cysteinyl-tRNA(Cys) + AMP + diphosphate. The sequence is that of Cysteine--tRNA ligase from Idiomarina loihiensis (strain ATCC BAA-735 / DSM 15497 / L2-TR).